Here is a 215-residue protein sequence, read N- to C-terminus: Probable transaldolase (215 aa).

The active-site Schiff-base intermediate with substrate is the K83.

The protein belongs to the transaldolase family. Type 3B subfamily.

It localises to the cytoplasm. It catalyses the reaction D-sedoheptulose 7-phosphate + D-glyceraldehyde 3-phosphate = D-erythrose 4-phosphate + beta-D-fructose 6-phosphate. Its pathway is carbohydrate degradation; pentose phosphate pathway; D-glyceraldehyde 3-phosphate and beta-D-fructose 6-phosphate from D-ribose 5-phosphate and D-xylulose 5-phosphate (non-oxidative stage): step 2/3. Functionally, transaldolase is important for the balance of metabolites in the pentose-phosphate pathway. This chain is Probable transaldolase, found in Heliobacterium modesticaldum (strain ATCC 51547 / Ice1).